Consider the following 2025-residue polypeptide: MSNRPNNNPGGSLRRSQRNTAGAQPQDDSIGGRSCSSSSAVIVPQPEDPDRANTSERQKTGQVPKKDNSRGVKRSASPDYNRTNSPSSAKKPRAFQHIESLSETNKPPSKSKKRHLDQEQQLKSAQLPSTSKAHTRKSVAAGSSRSQKRKRTESSCVKSGSGSESTGAEERSAKPTKLASKSATSAKAGCSTITDSSSAASTSSSSSAVASASSTVPAGARVKQGKDQNKARRSRSASSPSPRRSSREKEQSKTGGSSKFDWAARFSPKVSLPKTKLSLPGSSKSETSKPGPSGLQAKLASLRKSTKKRSESPPAELPSLRRSTRQKTTGSCASTSRRGSGLGKRGAAEARRQEKMADPEGNQETVNSSAARTDEAPQGAAASSSVAGAVGMTTSGESESDDSEMGRLQALLEARGLPPHLFGPLGPRMSQLFHRTIGSGASSKAQQLLQGLQASDESQQLQAVIEMCQLLVMGNEETLGGFPVKSVVPALITLLQMEHNFDIMNHACRALTYMMEALPRSSAVVVDAIPVFLEKLQVIQCIDVAEQALTALEMLSRRHSKAILQAGGLADCLLYLEFFSINAQRNALAIAANCCQSITPDEFHFVADSLPLLTQRLTHQDKKSVESTCLCFARLVDNFQHEENLLQQVASKDLLTNVQQLLVVTPPILSSGMFIMVVRMFSLMCSNCPTLAVQLMKQNIAETLHFLLCGASNGSCQEQIDLVPRSPQELYELTSLICELMPCLPKEGIFAVDTMLKKGNAQNTDGAIWQWRDDRGLWHPYNRIDSRIIEAAHQVGEDEISLSTLGRVYTIDFNSMQQINEDTGTARAIQRKPNPLANTNTSGYSDLKKDDARAQLMKEDPELAKSFIKTLFGVLYEVYSSSAGPAVRHKCLRAILRIIYFADAELLKDVLKNHAVSSHIASMLSSQDLKIVVGALQMAEILMQKLPDIFSVYFRREGVMHQVKHLAESESLLTSPPKACTNGSGSLGSTTPASSGTATAATNASADLGSPSLQHSRDDSLDLSPQGRLSDVLKRKRLPKRGPRRPKYSPPRDDDKVDNQAKSPTTTQSPKSSFLASLNPKTWGRLSAQSNSNNIEPARTAGVSGLARAASKDTISNNREKIKGWIKEQAHKFVERYFSSENMDGSNPALNVLQRLCAATEQLNLQVDGGAECLVEIRSIVSESDVSSFEIQHSGFVKQLLLYLTSKSEKDAVSREIRLKRFLHVFFSSPLPGEEPVGRVEPVGHAPLLALVHKMNNCLSQMEQFPVKVHDFPSGNGSGGSFSLNRGSQALKFFNTHQLKCQLQRHPDCANVKQWKGGPVKIDPLALVQAIERYLVVRGYGRVREDDEDSDDDGSDEEIDESLAAQFLNSGNVRHRLQFYIGEHLLPYNMTVYQAVRQFSVQAEDERESTDDESNPLGRAGIWTKTHTIWYKPVREDEESSKDCVGGKRGRAQTAPTKTSPRNAKKHDELWHDGVCPSVANPLEVYLIPTPPENITFEDPSLDVILLLRVLHAISRYWYYLYDNAMCKEIIPTSEFINSKLTAKANRQLQDPLVIMTGNIPTWLTELGKTCPFFFPFDTRQMLFYVTAFDRDRAMQRLLDTNPEINQSDSQDSRVAPRLDRKKRTVNREELLKQAESVMQDLGSSRAMLEIQYENEVGTGLGPTLEFYALVSQELQRADLGLWRGEEVTLSNPKGSQEGTKYIQNLQGLFALPFGRTAKPAHIAKVKMKFRFLGKLMAKAIMDFRLVDLPLGLPFYKWMLRQETSLTSHDLFDIDPVVARSVYHLEDIVRQKKRLEQDKSQTKESLQYALETLTMNGCSVEDLGLDFTLPGFPNIELKKGGKDIPVTIHNLEEYLRLVIFWALNEGVCRQFDSFRDGFESVFPLSHLQYFYPEELDQLLCGSKADTWDAKTLMECCRPDHGYTHDSRAVKFLFEILSSFDNEQQRLFLQFVTGSPRLPVGGFRSLNPPLTIVRKTFESTENPDDFLPSVMTCVNYLKLPDYSSIEIMRDKLLIAAREGQQSFHLS.

Residues 1 to 10 (MSNRPNNNPG) are compositionally biased toward polar residues. The tract at residues 1–404 (MSNRPNNNPG…SGESESDDSE (404 aa)) is disordered. An N-acetylserine modification is found at serine 2. Serine 12 is modified (phosphoserine). Over residues 18–27 (RNTAGAQPQD) the composition is skewed to polar residues. A compositionally biased stretch (basic and acidic residues) spans 48–70 (DPDRANTSERQKTGQVPKKDNSR). Residues serine 77, serine 85, and serine 100 each carry the phosphoserine modification. 3 stretches are compositionally biased toward polar residues: residues 78–88 (PDYNRTNSPSS), 99–108 (ESLSETNKPP), and 119–132 (EQQLKSAQLPSTSK). Low complexity-rich tracts occupy residues 154 to 166 (SSCVKSGSGSEST) and 175 to 216 (PTKL…SSTV). Lysine 181 is subject to N6-acetyllysine. Polar residues predominate over residues 280–290 (PGSSKSETSKP). Serine 310 and serine 312 each carry phosphoserine. Polar residues predominate over residues 326-338 (QKTTGSCASTSRR). Residues 346-358 (GAAEARRQEKMAD) show a composition bias toward basic and acidic residues. Positions 362–371 (NQETVNSSAA) are enriched in polar residues. Low complexity predominate over residues 379–397 (GAAASSSVAGAVGMTTSGE). The 115-residue stretch at 755-869 (MLKKGNAQNT…DPELAKSFIK (115 aa)) folds into the WWE domain. The disordered stretch occupies residues 970–1077 (ESLLTSPPKA…QSPKSSFLAS (108 aa)). Serine 975 is subject to Phosphoserine. Over residues 983-1006 (GSGSLGSTTPASSGTATAATNASA) the composition is skewed to low complexity. Residues serine 1024 and serine 1030 each carry the phosphoserine modification. The span at 1034 to 1047 (KRKRLPKRGPRRPK) shows a compositional bias: basic residues. Phosphoserine is present on serine 1049. The segment covering 1050–1059 (PPRDDDKVDN) has biased composition (basic and acidic residues). Low complexity predominate over residues 1062–1073 (KSPTTTQSPKSS). Residues serine 1063, serine 1350, serine 1355, serine 1362, and serine 1409 each carry the phosphoserine modification. Phosphothreonine is present on threonine 1410. 2 disordered regions span residues 1440–1466 (SSKDCVGGKRGRAQTAPTKTSPRNAKK) and 1601–1620 (TNPEINQSDSQDSRVAPRLD). Lysine 1458 carries the post-translational modification N6-acetyllysine. At serine 1460 the chain carries Phosphoserine. The K-box stretch occupies residues 1529–1603 (EIIPTSEFIN…AMQRLLDTNP (75 aa)). The 108-residue stretch at 1918-2025 (PDHGYTHDSR…REGQQSFHLS (108 aa)) folds into the HECT domain. The active-site Glycyl thioester intermediate is the cysteine 1992.

The protein belongs to the UPL family. K-HECT subfamily. Interacts with MYC; leading to disrupt interaction with isoform p19ARF/ARF of CDKN2A. Interacts with TRADD; leading to disrupt interaction with isoform p19ARF/ARF of CDKN2A. Interacts with SMARCC1; leading to disrupt interaction with SMARCE1.

The protein localises to the nucleus. It localises to the nucleoplasm. The enzyme catalyses S-ubiquitinyl-[E2 ubiquitin-conjugating enzyme]-L-cysteine + [acceptor protein]-L-lysine = [E2 ubiquitin-conjugating enzyme]-L-cysteine + N(6)-ubiquitinyl-[acceptor protein]-L-lysine.. The protein operates within protein modification; protein ubiquitination. In terms of biological role, E3 ubiquitin-protein ligase involved in ubiquitin fusion degradation (UFD) pathway and regulation of DNA repair. Part of the ubiquitin fusion degradation (UFD) pathway, a process that mediates ubiquitination of protein at their N-terminus, regardless of the presence of lysine residues in target proteins. Acts as a key regulator of DNA damage response by acting as a suppressor of RNF168, an E3 ubiquitin-protein ligase that promotes accumulation of 'Lys-63'-linked histone H2A and H2AX at DNA damage sites, thereby acting as a guard against excessive spreading of ubiquitinated chromatin at damaged chromosomes. In normal cells, mediates ubiquitination and degradation of isoform p19ARF/ARF of CDKN2A, a lysine-less tumor suppressor required for p53/TP53 activation under oncogenic stress. In cancer cells, however, isoform p19ARF/ARF and TRIP12 are located in different cell compartments, preventing isoform p19ARF/ARF ubiquitination and degradation. Does not mediate ubiquitination of isoform p16-INK4a of CDKN2A. Also catalyzes ubiquitination of NAE1 and SMARCE1, leading to their degradation. Ubiquitination and degradation of target proteins is regulated by interaction with proteins such as MYC, TRADD or SMARCC1, which disrupt the interaction between TRIP12 and target proteins. Mediates ubiquitination of ASXL1: following binding to N(6)-methyladenosine methylated DNA, ASXL1 is ubiquitinated by TRIP12, leading to its degradation and subsequent inactivation of the PR-DUB complex. This chain is E3 ubiquitin-protein ligase TRIP12 (Trip12), found in Rattus norvegicus (Rat).